The chain runs to 58 residues: Succinate dehydrogenase subunit 8B, mitochondrial (58 aa).

Component of complex II composed of eight subunits in plants: four classical SDH subunits SDH1, SDH2, SDH3 and SDH4 (a flavoprotein (FP), an iron-sulfur protein (IP), and a cytochrome b composed of a large and a small subunit.), as well as four subunits unknown in mitochondria from bacteria and heterotrophic eukaryotes.

It localises to the mitochondrion inner membrane. The protein operates within carbohydrate metabolism; tricarboxylic acid cycle. This is Succinate dehydrogenase subunit 8B, mitochondrial from Oryza sativa subsp. japonica (Rice).